The chain runs to 305 residues: Glycine--tRNA ligase alpha subunit (305 aa).

The protein belongs to the class-II aminoacyl-tRNA synthetase family. Tetramer of two alpha and two beta subunits.

It is found in the cytoplasm. The enzyme catalyses tRNA(Gly) + glycine + ATP = glycyl-tRNA(Gly) + AMP + diphosphate. The protein is Glycine--tRNA ligase alpha subunit of Streptococcus pneumoniae (strain CGSP14).